The chain runs to 263 residues: uncharacterized protein (263 aa).

Residues 22-44 (IDGSDDQSDRTRSSSGDSTSNSL) are disordered. The span at 34 to 43 (SSSGDSTSNS) shows a compositional bias: low complexity.

Its subcellular location is the mitochondrion. This is an uncharacterized protein from Schizosaccharomyces pombe (strain 972 / ATCC 24843) (Fission yeast).